The sequence spans 191 residues: dTTP/UTP pyrophosphatase (191 aa).

Asp71 functions as the Proton acceptor in the catalytic mechanism.

The protein belongs to the Maf family. YhdE subfamily. It depends on a divalent metal cation as a cofactor.

Its subcellular location is the cytoplasm. It carries out the reaction dTTP + H2O = dTMP + diphosphate + H(+). The enzyme catalyses UTP + H2O = UMP + diphosphate + H(+). Its function is as follows. Nucleoside triphosphate pyrophosphatase that hydrolyzes dTTP and UTP. May have a dual role in cell division arrest and in preventing the incorporation of modified nucleotides into cellular nucleic acids. This chain is dTTP/UTP pyrophosphatase, found in Geobacter sulfurreducens (strain ATCC 51573 / DSM 12127 / PCA).